The primary structure comprises 147 residues: Large ribosomal subunit protein uL15 (147 aa).

Over residues 1–11 the composition is skewed to basic and acidic residues; it reads MKLHDLRPAKD. The interval 1 to 57 is disordered; it reads MKLHDLRPAKDAKKKRKRVGRGTGSGRGFTSGRGSKGQNARSGGGVRPTFEGGQTPL. Positions 21–35 are enriched in gly residues; that stretch reads RGTGSGRGFTSGRGS.

The protein belongs to the universal ribosomal protein uL15 family. In terms of assembly, part of the 50S ribosomal subunit.

In terms of biological role, binds to the 23S rRNA. The polypeptide is Large ribosomal subunit protein uL15 (Halothermothrix orenii (strain H 168 / OCM 544 / DSM 9562)).